The primary structure comprises 882 residues: Alanine--tRNA ligase (882 aa).

Zn(2+) is bound by residues H564, H568, C666, and H670.

This sequence belongs to the class-II aminoacyl-tRNA synthetase family. Zn(2+) is required as a cofactor.

The protein localises to the cytoplasm. The catalysed reaction is tRNA(Ala) + L-alanine + ATP = L-alanyl-tRNA(Ala) + AMP + diphosphate. Catalyzes the attachment of alanine to tRNA(Ala) in a two-step reaction: alanine is first activated by ATP to form Ala-AMP and then transferred to the acceptor end of tRNA(Ala). Also edits incorrectly charged Ser-tRNA(Ala) and Gly-tRNA(Ala) via its editing domain. In Rubrobacter xylanophilus (strain DSM 9941 / JCM 11954 / NBRC 16129 / PRD-1), this protein is Alanine--tRNA ligase.